The sequence spans 536 residues: Probable 1,4-beta-D-glucan cellobiohydrolase B (536 aa).

A signal peptide spans 1 to 21 (MSSFQVYRAALLLSILATANA). A catalytic region spans residues 22–458 (QQVGTYTTET…SNIKFGPIGS (437 aa)). Catalysis depends on Glu233, which acts as the Nucleophile. The active-site Proton donor is Glu238. Residues Asn351 and Asn414 are each glycosylated (N-linked (GlcNAc...) asparagine). Residues 459–500 (TYSSGSSSGSGSSSSSSSTTTKATSTTLKTTSTTSSGSSSTS) form a ser/Thr-rich linker region. The tract at residues 464 to 499 (SSSGSGSSSSSSSTTTKATSTTLKTTSTTSSGSSST) is disordered. Positions 500–536 (SAAQAYGQCGGQGWTGPTTCVSGYTCTYENAYYSQCL) constitute a CBM1 domain. Intrachain disulfides connect Cys508–Cys525 and Cys519–Cys535.

Belongs to the glycosyl hydrolase 7 (cellulase C) family.

It is found in the secreted. It catalyses the reaction Hydrolysis of (1-&gt;4)-beta-D-glucosidic linkages in cellulose and cellotetraose, releasing cellobiose from the non-reducing ends of the chains.. Its function is as follows. The biological conversion of cellulose to glucose generally requires three types of hydrolytic enzymes: (1) Endoglucanases which cut internal beta-1,4-glucosidic bonds; (2) Exocellobiohydrolases that cut the disaccharide cellobiose from the non-reducing end of the cellulose polymer chain; (3) Beta-1,4-glucosidases which hydrolyze the cellobiose and other short cello-oligosaccharides to glucose. This chain is Probable 1,4-beta-D-glucan cellobiohydrolase B (cbhB), found in Aspergillus niger (strain ATCC MYA-4892 / CBS 513.88 / FGSC A1513).